A 153-amino-acid chain; its full sequence is 3-hydroxyacyl-[acyl-carrier-protein] dehydratase FabZ (153 aa).

Residue His-53 is part of the active site.

Belongs to the thioester dehydratase family. FabZ subfamily.

The protein resides in the cytoplasm. The catalysed reaction is a (3R)-hydroxyacyl-[ACP] = a (2E)-enoyl-[ACP] + H2O. Its function is as follows. Involved in unsaturated fatty acids biosynthesis. Catalyzes the dehydration of short chain beta-hydroxyacyl-ACPs and long chain saturated and unsaturated beta-hydroxyacyl-ACPs. This Lawsonia intracellularis (strain PHE/MN1-00) protein is 3-hydroxyacyl-[acyl-carrier-protein] dehydratase FabZ.